A 945-amino-acid chain; its full sequence is MSNKKADSKPQAKYPVNLLDTPFPMRGDLPKREPQWVKEWEERGIYEKIRAASKGRPKFILHDGPPYANGDIHLGHAVNKILKDIVVKSRNMAGFDAPYVPGWDCHGMPIEIQIEKQFGKSLPAAEVMSKARAYATEQIEKQKVGFKRLGVLGDWANPYKTMNFVNEAEEIRALGKIIEKGYVYRGLKPVNWCFDCGSALAEAEVEYKDRTDPTIDVMFAFAEPEKTAQAFGLPALPRAEGGIVIWTTTPWTIPANQALNLHPEIVYALVDTERGLLIIAEERVAACMADFKLTGRVVATAPGVKLANLRFHHPLASAHPGYKRTAPVYLGDYVTTDTGTGVVHSSPAYGIEDFMSCKAHGMTDSDFINPVMGDGRYIESLPLFGGLSIWDANPKIVDALNVAGSLLRSEKYTHSYMHCWRHKTPIIYRATSQWFAGMDVTPRDDGRTLREAALEGVEATAFYPSWGKQRLFSMIANRPDWTLSRQRQWGVPMAFFVHKETGELHPRTLELLEEVAKRVEQSGIEAWQSLDPRELIGDDANMYEKNRDTLDVWFDSGTTHWHVLRGSHKDQLQFPADLYLEGSDQHRGWFHSSLLTASMIDGRAPYKGLLTHGFTVDGEGRKMSKSLGNGVDPHEVANRLGAEIIRLWIASTDYSGELAISEEILKRVTEGYRRIRNTLRFLLANLSDFDFAQHAVPVDEWLEIDRYAVAFSAQLQTELLGHYEKYEFHPVVAKLQTYCSEDLGGFYLDVLKDRLYTSAADSRARRSAQTALYHLTHGLLRVLAPFLSFTAEEAWKVFQPASDTVFTETYYAYPEVAGSAALIDKWALLRDVRGNVTKALEEARTANRIGSSLQAEVAVHASGARYDALTSLGDDLKFVLITSAATVVKVDDEAQESVDVAASKYQKCERCWHYREDVGAHADHPTLCGRCFSNLFENGEIRSAA.

Residues 66 to 76 carry the 'HIGH' region motif; the sequence is PYANGDIHLGH. Glu-581 serves as a coordination point for L-isoleucyl-5'-AMP. The short motif at 622 to 626 is the 'KMSKS' region element; that stretch reads KMSKS. Lys-625 provides a ligand contact to ATP. Residues Cys-908, Cys-911, Cys-928, and Cys-931 each contribute to the Zn(2+) site.

The protein belongs to the class-I aminoacyl-tRNA synthetase family. IleS type 1 subfamily. In terms of assembly, monomer. Zn(2+) serves as cofactor.

It is found in the cytoplasm. The catalysed reaction is tRNA(Ile) + L-isoleucine + ATP = L-isoleucyl-tRNA(Ile) + AMP + diphosphate. Catalyzes the attachment of isoleucine to tRNA(Ile). As IleRS can inadvertently accommodate and process structurally similar amino acids such as valine, to avoid such errors it has two additional distinct tRNA(Ile)-dependent editing activities. One activity is designated as 'pretransfer' editing and involves the hydrolysis of activated Val-AMP. The other activity is designated 'posttransfer' editing and involves deacylation of mischarged Val-tRNA(Ile). This is Isoleucine--tRNA ligase from Burkholderia ambifaria (strain MC40-6).